Consider the following 628-residue polypeptide: Glutamyl-tRNA(Gln) amidotransferase subunit E (628 aa).

This sequence belongs to the GatB/GatE family. GatE subfamily. In terms of assembly, heterodimer of GatD and GatE.

It carries out the reaction L-glutamyl-tRNA(Gln) + L-glutamine + ATP + H2O = L-glutaminyl-tRNA(Gln) + L-glutamate + ADP + phosphate + H(+). Allows the formation of correctly charged Gln-tRNA(Gln) through the transamidation of misacylated Glu-tRNA(Gln) in organisms which lack glutaminyl-tRNA synthetase. The reaction takes place in the presence of glutamine and ATP through an activated gamma-phospho-Glu-tRNA(Gln). The GatDE system is specific for glutamate and does not act on aspartate. The chain is Glutamyl-tRNA(Gln) amidotransferase subunit E from Pyrococcus furiosus (strain ATCC 43587 / DSM 3638 / JCM 8422 / Vc1).